The primary structure comprises 846 residues: SLIT and NTRK-like protein 2 (846 aa).

The signal sequence occupies residues 1-21 (MLSGVWFLSVLTVAGILQTES). The Extracellular segment spans residues 22–622 (RKTAKDICKI…LHTEVPLSVL (601 aa)). 2 disulfides stabilise this stretch: Cys29-Cys35 and Cys33-Cys46. LRR repeat units lie at residues 63–84 (RIYQ…EFVN), 87–108 (NAVT…AFSG), 111–132 (TLKR…TFLG), 135–156 (SLEY…AFSK), 159–180 (KLKV…VFRF), and 182–203 (LLTH…GVLE). Asn84 carries an N-linked (GlcNAc...) asparagine glycan. The required for interaction with PTPRD stretch occupies residues 167 to 215 (DNLLLSLPSNVFRFVLLTHLDLRGNRLKVMPFAGVLEHIGGIMEIQLEE). The LRRCT 1 domain maps to 216-265 (NPWNCTCDLLPLKAWLDTITVFVGEIVCETPFRLHGKDVTQLTRQDLCPR). The N-linked (GlcNAc...) asparagine glycan is linked to Asn219. Intrachain disulfides connect Cys220-Cys243 and Cys222-Cys263. The segment at 261–322 (DLCPRKSASG…TPRVTVSKDR (62 aa)) is disordered. Composition is skewed to low complexity over residues 267–276 (SASGDSSQRS) and 285–300 (RLTP…TRAP). The LRRNT domain maps to 332–374 (QTKSPVALTCPSSCVCTSQSSDNGLNVNCQERKFTNISDLQPK). 6 LRR repeats span residues 377–398 (SPKK…DLLE), 401–422 (SLDL…AFTN), 425–446 (SLRR…MFDG), 449–470 (SLQY…TFDA), 473–494 (NLQL…IFGG), and 496–517 (ALTR…GVLD). Residue Asn422 is glycosylated (N-linked (GlcNAc...) asparagine). In terms of domain architecture, LRRCT 2 spans 530 to 581 (NPWDCTCDIMGLKDWTEHANSPVIINEVTCESPAKHAGEILKFLGREAICPE). Residues 623-643 (ILGLLVVFILSVCFGAGLFVF) form a helical membrane-spanning segment. Over 644–846 (VLKRRKGVPN…LEKQTAISQL (203 aa)) the chain is Cytoplasmic. A Phosphotyrosine modification is found at Tyr757.

It belongs to the SLITRK family. Interacts with PTPRD; this interaction is PTPRD splicing-dependent and may induce pre-synaptic differentiation. Interacts with NTRK2. In the adult, significant expression is detected only in the brain. Broadly expressed in embryonic brain with highest expression in ventricular layer, subventricular zone, cortical plate, pyramidal layer of hippocampus, subicular neuroepithelium, thalamus, hypothalamus and spinal cord.

The protein resides in the membrane. It is found in the cell membrane. It localises to the cell projection. Its subcellular location is the dendrite. Functionally, it is involved in synaptogenesis. Promotes excitatory synapse differentiation. Suppresses neurite outgrowth. Involved in the negative regulation of NTRK2. In Mus musculus (Mouse), this protein is SLIT and NTRK-like protein 2 (Slitrk2).